The primary structure comprises 147 residues: Transcriptional regulator MraZ (147 aa).

2 consecutive SpoVT-AbrB domains span residues 6 to 48 (NFER…NSEE) and 77 to 120 (TVEV…SKAK).

It belongs to the MraZ family. In terms of assembly, forms oligomers.

The protein localises to the cytoplasm. It is found in the nucleoid. The chain is Transcriptional regulator MraZ from Mycoplasmopsis pulmonis (strain UAB CTIP) (Mycoplasma pulmonis).